A 273-amino-acid chain; its full sequence is Putative phosphoenolpyruvate synthase regulatory protein (273 aa).

153–160 is a binding site for ADP; that stretch reads AVSRAGKT.

This sequence belongs to the pyruvate, phosphate/water dikinase regulatory protein family. PSRP subfamily.

It carries out the reaction [pyruvate, water dikinase] + ADP = [pyruvate, water dikinase]-phosphate + AMP + H(+). The catalysed reaction is [pyruvate, water dikinase]-phosphate + phosphate + H(+) = [pyruvate, water dikinase] + diphosphate. Bifunctional serine/threonine kinase and phosphorylase involved in the regulation of the phosphoenolpyruvate synthase (PEPS) by catalyzing its phosphorylation/dephosphorylation. This is Putative phosphoenolpyruvate synthase regulatory protein from Xanthomonas campestris pv. campestris (strain 8004).